Consider the following 142-residue polypeptide: Transcriptional regulator MraZ (142 aa).

SpoVT-AbrB domains lie at 5-51 and 77-120; these read ASAL…PRPE and AMDV…DAQT.

Belongs to the MraZ family. Forms oligomers.

It localises to the cytoplasm. It is found in the nucleoid. The polypeptide is Transcriptional regulator MraZ (Burkholderia mallei (strain NCTC 10247)).